The following is a 551-amino-acid chain: Probable aldehyde dehydrogenase (551 aa).

278–283 (GSSRVA) lines the NAD(+) pocket. The active-site Proton acceptor is the E297. C332 functions as the Nucleophile in the catalytic mechanism.

This sequence belongs to the aldehyde dehydrogenase family. In terms of tissue distribution, in uninfected plants, highest levels found in stems. In plants infected with the flax rust, highest levels in leaves. Higher levels of expression in infected leaves than uninfected stems.

It catalyses the reaction an aldehyde + NAD(+) + H2O = a carboxylate + NADH + 2 H(+). Functionally, could be involved in facilitating the biotrophic relationship between the plant and the rust fungus. The protein is Probable aldehyde dehydrogenase (FIS1) of Linum usitatissimum (Flax).